A 172-amino-acid polypeptide reads, in one-letter code: Stellate protein CG33239/CG33241 (172 aa).

The protein belongs to the casein kinase 2 subunit beta family. Interacts in vitro with the casein kinase 2 alpha subunit (CkII-alpha). The relevance of such interaction is however unclear in vivo. In terms of tissue distribution, probably not expressed in wild-type flies. In males lacking the Y chromosome, it is testis-specific and constitutes the main component of star-shaped crystals.

Functionally, unknown. In males lacking the Y chromosome, its strong overexpression leads to the appearance of proteinaceous star-shaped crystals in the primary spermatocytes causing meiotic drive, possibly by interfering with normal casein kinase 2 activity. This Drosophila melanogaster (Fruit fly) protein is Stellate protein CG33239/CG33241 (Ste:CG33239).